The following is a 4367-amino-acid chain: Dynein heavy chain, cytoplasmic (4367 aa).

The span at 1–13 (MMDSVPSPPPQPS) shows a compositional bias: pro residues. Residues 1–20 (MMDSVPSPPPQPSPDANGVA) are disordered. The segment at 1–1904 (MMDSVPSPPP…HIKMANAKLN (1904 aa)) is stem. Coiled coils occupy residues 676–693 (ARQIERQLDQYMKKVEQV), 1176–1215 (IKFASRLGNRMREVYAELEKARKDLEGQAMTANSTAEAVR), 1327–1351 (LTHFEQRITKLQEESAMVAKAKEAL), 1557–1574 (YKEFEEEASSWEEKLNRV), and 1637–1668 (NIPNVQKSLERLAELLNKIQKALGEYLEKERV). AAA stretches follow at residues 1905 to 2130 (YGFE…VLVS), 2202 to 2460 (EAIR…FTVA), 2566 to 2815 (EVNT…WVRG), and 2909 to 3179 (TFCE…QGKI). An ATP-binding site is contributed by 1943 to 1950 (GPAGTGKT). Residues 2195 to 2218 (ASLEKLQEAIRRLAAERQLVVNDI) adopt a coiled-coil conformation. ATP is bound by residues 2240–2247 (GNSGSGKS), 2605–2612 (GPPGSGKT), and 2947–2954 (GVSGSGKT). Coiled coils occupy residues 3193 to 3296 (QYVK…LARA), 3423 to 3481 (PLRE…SRVQ), and 3778 to 3809 (VIETLETLKTEAAEISAKMSNTEGVMAEVEQI). The segment at 3193–3481 (QYVKLYNEKR…AIKAEMSRVQ (289 aa)) is stalk. AAA regions lie at residues 3565–3794 (LSTA…EISA) and 4003–4215 (AERF…VIDT).

It belongs to the dynein heavy chain family. As to quaternary structure, consists of at least two heavy chains and a number of intermediate and light chains.

The protein localises to the cytoplasm. It is found in the cytoskeleton. Cytoplasmic dynein acts as a motor for the intracellular retrograde motility of vesicles and organelles along microtubules. Dynein has ATPase activity; the force-producing power stroke is thought to occur on release of ADP. Required to maintain uniform nuclear distribution in hyphae. In Neurospora crassa (strain ATCC 24698 / 74-OR23-1A / CBS 708.71 / DSM 1257 / FGSC 987), this protein is Dynein heavy chain, cytoplasmic (ro-1).